The chain runs to 440 residues: Signal recognition particle 54 kDa protein (440 aa).

Residues 104–111 (GLQGSGKT), 184–188 (DTAGR), and 242–245 (TKLD) contribute to the GTP site.

Belongs to the GTP-binding SRP family. SRP54 subfamily. Part of the signal recognition particle protein translocation system, which is composed of SRP and FtsY. Archaeal SRP consists of a 7S RNA molecule of 300 nucleotides and two protein subunits: SRP54 and SRP19.

The protein localises to the cytoplasm. It catalyses the reaction GTP + H2O = GDP + phosphate + H(+). Involved in targeting and insertion of nascent membrane proteins into the cytoplasmic membrane. Binds to the hydrophobic signal sequence of the ribosome-nascent chain (RNC) as it emerges from the ribosomes. The SRP-RNC complex is then targeted to the cytoplasmic membrane where it interacts with the SRP receptor FtsY. The sequence is that of Signal recognition particle 54 kDa protein from Methanosarcina acetivorans (strain ATCC 35395 / DSM 2834 / JCM 12185 / C2A).